We begin with the raw amino-acid sequence, 193 residues long: MSYRKQRETKETAIDIRMDLNDNQASSINTGVGFLDHMLTLFSFHSGINLQINVQGDTEVDDHHTTEDIGIVLGQLLLEAIKDKQSFTRYGAFYIPMDETLARVVTDISGRPYLSFNAEFSKEKVGTFDTELVEEFFRGLVINARLTTHIDLIRGGNTHHEIEAIFKAFARSLKIALSDDGSKGVPSSKGVIE.

It belongs to the imidazoleglycerol-phosphate dehydratase family.

The protein localises to the cytoplasm. It catalyses the reaction D-erythro-1-(imidazol-4-yl)glycerol 3-phosphate = 3-(imidazol-4-yl)-2-oxopropyl phosphate + H2O. The protein operates within amino-acid biosynthesis; L-histidine biosynthesis; L-histidine from 5-phospho-alpha-D-ribose 1-diphosphate: step 6/9. The polypeptide is Imidazoleglycerol-phosphate dehydratase (Staphylococcus carnosus (strain TM300)).